The chain runs to 619 residues: Cationic amino acid transporter 3 (619 aa).

At 1-36 (MPWQAFRRFGQKLVRRRTLESGMAETRLARCLSTLD) the chain is on the cytoplasmic side. The chain crosses the membrane as a helical span at residues 37–57 (LVALGVGSTLGAGVYVLAGEV). Topologically, residues 58–61 (AKDK) are extracellular. The helical transmembrane segment at 62–82 (AGPSIVICFLVAALSSVLAGL) threads the bilayer. The Cytoplasmic segment spans residues 83–107 (CYAEFGARVPRSGSAYLYSYVTVGE). Residues 108–128 (LWAFTTGWNLILSYVIGTASV) traverse the membrane as a helical segment. Residues 129–162 (ARAWSSAFDNLIGNHISKTLQGSIALHVPHVLAE) are Extracellular-facing. Residues 163–183 (YPDFFALGLVLLLTGLLALGA) traverse the membrane as a helical segment. The Cytoplasmic portion of the chain corresponds to 184–191 (SESALVTK). The chain crosses the membrane as a helical span at residues 192-212 (VFTGVNLLVLGFVMISGFVKG). Residues 213-233 (DVHNWKLTEEDYELAMAELND) lie on the Extracellular side of the membrane. Asn232 carries an N-linked (GlcNAc...) asparagine glycan. A helical transmembrane segment spans residues 234 to 254 (TYSLGPLGSGGFVPFGFEGIL). Residues 255–285 (RGAATCFYAFVGFDCIATTGEEAQNPQRSIP) lie on the Cytoplasmic side of the membrane. Residues 286 to 306 (MGIVISLSVCFLAYFAVSSAL) traverse the membrane as a helical segment. Topologically, residues 307–335 (TLMMPYYQLQPESPLPEAFLYIGWAPARY) are extracellular. The helical transmembrane segment at 336–356 (VVAVGSLCALSTSLLGSMFPM) threads the bilayer. Residues 357 to 382 (PRVIYAMAEDGLLFRVLARIHTGTRT) are Cytoplasmic-facing. The helical transmembrane segment at 383–403 (PIIATVVSGIIAAFMAFLFKL) threads the bilayer. The Extracellular segment spans residues 404–406 (TDL). A helical transmembrane segment spans residues 407-427 (VDLMSIGTLLAYSLVSICVLI). Topologically, residues 428-475 (LRYQPDQETKTGEEVELQEEAITTESEKLTLWGLFFPLNSIPTPLSGQ) are cytoplasmic. The chain crosses the membrane as a helical span at residues 476 to 496 (IVYVCSSLLAVLLTALCLVLA). At 497–506 (QWSVPLLSGD) the chain is on the extracellular side. Residues 507-527 (LLWTAVVVLLLLLIIGIIVVI) form a helical membrane-spanning segment. The Cytoplasmic segment spans residues 528-540 (WRQPQSSTPLHFK). The helical transmembrane segment at 541–561 (VPALPLLPLMSIFVNIYLMMQ) threads the bilayer. Residues 562 to 569 (MTAGTWAR) are Extracellular-facing. Residues 570-590 (FGVWMLIGFAIYFGYGIQHSL) traverse the membrane as a helical segment. At 591 to 619 (EEIKSNQPSRKSRAKTVDLDPGTLYVHSV) the chain is on the cytoplasmic side. Phosphothreonine is present on Thr606. A Phosphoserine modification is found at Ser618.

It belongs to the amino acid-polyamine-organocation (APC) superfamily. Cationic amino acid transporter (CAT) (TC 2.A.3.3) family. In terms of processing, N-glycosylated. As to expression, highly expressed in thymus, uterus and testis. Detected at lower levels in brain, mammary gland, prostate, salivary gland and fetal spleen. In brain, highest expression in thalamus, hippocampus and amygdala.

It is found in the cell membrane. The catalysed reaction is L-arginine(in) = L-arginine(out). The enzyme catalyses L-lysine(in) = L-lysine(out). It carries out the reaction L-ornithine(in) = L-ornithine(out). In terms of biological role, uniporter that mediates the uptake of cationic L-amino acids such as L-arginine, L-lysine and L-ornithine. The transport is sodium ions- and pH-independent, moderately trans-stimulated and is mediated by passive diffusion. The protein is Cationic amino acid transporter 3 of Homo sapiens (Human).